The sequence spans 412 residues: 4-hydroxyphenylpyruvate dioxygenase (412 aa).

2 VOC domains span residues 31–179 (GYDH…LISR) and 209–369 (RIDH…LFTK). Fe cation is bound by residues histidine 212, histidine 295, and glutamate 380.

The protein belongs to the 4HPPD family. It depends on Fe cation as a cofactor.

It carries out the reaction 3-(4-hydroxyphenyl)pyruvate + O2 = homogentisate + CO2. It functions in the pathway amino-acid degradation; L-phenylalanine degradation; acetoacetate and fumarate from L-phenylalanine: step 3/6. The chain is 4-hydroxyphenylpyruvate dioxygenase from Neurospora crassa (strain ATCC 24698 / 74-OR23-1A / CBS 708.71 / DSM 1257 / FGSC 987).